Consider the following 349-residue polypeptide: Rhodopsin (349 aa).

Topologically, residues 1–33 (TEGPYFYIPMSNATGVVRSPYEYPQYYLVYPAA) are extracellular. An N-linked (GlcNAc...) asparagine glycan is attached at N12. Residues 34–58 (FAVLGAYMFFLIIFGFPVNFLTLYV) traverse the membrane as a helical segment. Topologically, residues 59–70 (TIEHKKLRTPLN) are cytoplasmic. The helical transmembrane segment at 71–93 (YILLNLAVADLFMVIGGFTTTIY) threads the bilayer. Over 94–107 (TSMHGYFVLGRLGC) the chain is Extracellular. Cysteines 107 and 184 form a disulfide. A helical transmembrane segment spans residues 108 to 130 (NLEGFSATLGGMISLWSLVVLAV). The short motif at 131-133 (ERW) is the 'Ionic lock' involved in activated form stabilization element. Topologically, residues 131-149 (ERWVVVCKPMSNFRFGENH) are cytoplasmic. A helical transmembrane segment spans residues 150–170 (AIMGVTLTWAMGLACTVPPLV). Over 171 to 199 (GWSRYIPEGMQCSCGIDYYTRAEGFNNES) the chain is Extracellular. Residue N197 is glycosylated (N-linked (GlcNAc...) asparagine). The helical transmembrane segment at 200–221 (FVLYMFVCHFSFPLVVIFFCYG) threads the bilayer. Topologically, residues 222-249 (RLLCAVKEAAAAQQESETTQRAEREVTR) are cytoplasmic. A helical membrane pass occupies residues 250–271 (MVILMVIGFLVCWLPYASVAWY). The Extracellular segment spans residues 272–283 (IFTHQGSEFGPL). A helical membrane pass occupies residues 284 to 305 (FMTIPAFFAKSSAIYNPVIYIC). K293 bears the N6-(retinylidene)lysine mark. Residues 306–349 (LNKQFRQCMLTTLFCGKNPFEEEEGASSTKTEASSASSSSVSPA) lie on the Cytoplasmic side of the membrane. The S-palmitoyl cysteine moiety is linked to residue C320. The segment at 326-349 (EEEEGASSTKTEASSASSSSVSPA) is disordered. A compositionally biased stretch (low complexity) spans 331–349 (ASSTKTEASSASSSSVSPA).

The protein belongs to the G-protein coupled receptor 1 family. Opsin subfamily. In terms of processing, phosphorylated on some or all of the serine and threonine residues present in the C-terminal region. Post-translationally, contains one covalently linked retinal chromophore.

It is found in the membrane. It localises to the cell projection. The protein localises to the cilium. The protein resides in the photoreceptor outer segment. Photoreceptor required for image-forming vision at low light intensity. While most salt water fish species use retinal as chromophore, most freshwater fish use 3-dehydroretinal, or a mixture of retinal and 3-dehydroretinal. Light-induced isomerization of 11-cis to all-trans retinal triggers a conformational change that activates signaling via G-proteins. Subsequent receptor phosphorylation mediates displacement of the bound G-protein alpha subunit by arrestin and terminates signaling. The chain is Rhodopsin (rho) from Myripristis berndti (Bigscale soldierfish).